The following is a 439-amino-acid chain: Probable cinnamyl alcohol dehydrogenase 8C (439 aa).

Zn(2+) is bound at residue cysteine 120. NADP(+) is bound at residue threonine 122. Zn(2+)-binding residues include histidine 142, glutamate 143, cysteine 173, cysteine 176, cysteine 179, cysteine 187, and cysteine 239. Residues threonine 243, 264-269 (GLGGLG), 287-292 (STSPGK), threonine 327, glycine 351, and 374-376 (NCV) each bind NADP(+).

It belongs to the zinc-containing alcohol dehydrogenase family. As to quaternary structure, homodimer. It depends on Zn(2+) as a cofactor.

It catalyses the reaction (E)-cinnamyl alcohol + NADP(+) = (E)-cinnamaldehyde + NADPH + H(+). The catalysed reaction is (E)-coniferol + NADP(+) = (E)-coniferaldehyde + NADPH + H(+). It carries out the reaction (E)-sinapyl alcohol + NADP(+) = (E)-sinapaldehyde + NADPH + H(+). The enzyme catalyses (E)-4-coumaroyl alcohol + NADP(+) = (E)-4-coumaraldehyde + NADPH + H(+). It catalyses the reaction (E)-caffeyl alcohol + NADP(+) = (E)-caffeyl aldehyde + NADPH + H(+). Its pathway is aromatic compound metabolism; phenylpropanoid biosynthesis. Functionally, involved in lignin biosynthesis. Catalyzes the final step specific for the production of lignin monomers. Catalyzes the NADPH-dependent reduction of coniferaldehyde, 5-hydroxyconiferaldehyde, sinapaldehyde, 4-coumaraldehyde and caffeyl aldehyde to their respective alcohols. The protein is Probable cinnamyl alcohol dehydrogenase 8C of Oryza sativa subsp. japonica (Rice).